The primary structure comprises 271 residues: Large ribosomal subunit protein uL2 (271 aa).

Residues 221–271 are disordered; sequence RGVAMNPVDHPMGGGEGKSSGGHPRNRNGIPSNGFKTRNKKKITNKYIIKK. Residues 257 to 271 are compositionally biased toward basic residues; sequence TRNKKKITNKYIIKK.

This sequence belongs to the universal ribosomal protein uL2 family. In terms of assembly, part of the 50S ribosomal subunit. Forms a bridge to the 30S subunit in the 70S ribosome.

Functionally, one of the primary rRNA binding proteins. Required for association of the 30S and 50S subunits to form the 70S ribosome, for tRNA binding and peptide bond formation. It has been suggested to have peptidyltransferase activity; this is somewhat controversial. Makes several contacts with the 16S rRNA in the 70S ribosome. This chain is Large ribosomal subunit protein uL2, found in Karelsulcia muelleri (strain GWSS) (Sulcia muelleri).